The sequence spans 290 residues: Probable aquaporin PIP2-1 (290 aa).

The next 2 helical transmembrane spans lie at 43 to 63 and 80 to 100; these read AVIA…ATVI and CGGV…FILV. Positions 112-114 match the NPA 1 motif; that stretch reads NPA. 3 consecutive transmembrane segments (helical) span residues 131–151, 173–193, and 207–227; these read ILYI…VKAF, GTGL…VFSA, and VLAP…TIPI. Residues 233–235 carry the NPA 2 motif; sequence NPA. Residues 255-275 form a helical membrane-spanning segment; it reads IFWVGPFVGAAIAAFYHQYIL.

The protein belongs to the MIP/aquaporin (TC 1.A.8) family. PIP (TC 1.A.8.11) subfamily. In terms of tissue distribution, expressed in roots, leaves and anthers.

It is found in the cell membrane. Functionally, aquaporins facilitate the transport of water and small neutral solutes across cell membranes. The chain is Probable aquaporin PIP2-1 (PIP2-1) from Oryza sativa subsp. japonica (Rice).